The primary structure comprises 301 residues: Pyridoxal 5'-phosphate synthase subunit PdxS (301 aa).

A D-ribose 5-phosphate-binding site is contributed by Asp31. Residue Lys88 is the Schiff-base intermediate with D-ribose 5-phosphate of the active site. A D-ribose 5-phosphate-binding site is contributed by Gly160. Arg172 contributes to the D-glyceraldehyde 3-phosphate binding site. D-ribose 5-phosphate contacts are provided by residues Gly221 and 242–243 (GS). Residues 273 to 301 (EIAKSPGKGMKGQANETLPEEEKLQDRGI) form a disordered region. Positions 292-301 (EEEKLQDRGI) are enriched in basic and acidic residues.

Belongs to the PdxS/SNZ family. In the presence of PdxT, forms a dodecamer of heterodimers.

The enzyme catalyses aldehydo-D-ribose 5-phosphate + D-glyceraldehyde 3-phosphate + L-glutamine = pyridoxal 5'-phosphate + L-glutamate + phosphate + 3 H2O + H(+). The protein operates within cofactor biosynthesis; pyridoxal 5'-phosphate biosynthesis. In terms of biological role, catalyzes the formation of pyridoxal 5'-phosphate from ribose 5-phosphate (RBP), glyceraldehyde 3-phosphate (G3P) and ammonia. The ammonia is provided by the PdxT subunit. Can also use ribulose 5-phosphate and dihydroxyacetone phosphate as substrates, resulting from enzyme-catalyzed isomerization of RBP and G3P, respectively. In Natronomonas pharaonis (strain ATCC 35678 / DSM 2160 / CIP 103997 / JCM 8858 / NBRC 14720 / NCIMB 2260 / Gabara) (Halobacterium pharaonis), this protein is Pyridoxal 5'-phosphate synthase subunit PdxS.